The following is a 740-amino-acid chain: Phosphoribosylformylglycinamidine synthase subunit PurL (740 aa).

His-53 is a catalytic residue. ATP-binding residues include Tyr-56 and Lys-95. Glu-97 is a binding site for Mg(2+). Substrate-binding positions include 98-101 (SHNH) and Arg-120. His-99 (proton acceptor) is an active-site residue. Asp-121 lines the Mg(2+) pocket. Gln-244 is a substrate binding site. Residue Asp-274 coordinates Mg(2+). Residue 318–320 (ESQ) coordinates substrate. ATP-binding residues include Asp-501 and Gly-538. Asn-539 lines the Mg(2+) pocket. A substrate-binding site is contributed by Ser-541.

Belongs to the FGAMS family. In terms of assembly, monomer. Part of the FGAM synthase complex composed of 1 PurL, 1 PurQ and 2 PurS subunits.

The protein localises to the cytoplasm. The catalysed reaction is N(2)-formyl-N(1)-(5-phospho-beta-D-ribosyl)glycinamide + L-glutamine + ATP + H2O = 2-formamido-N(1)-(5-O-phospho-beta-D-ribosyl)acetamidine + L-glutamate + ADP + phosphate + H(+). It functions in the pathway purine metabolism; IMP biosynthesis via de novo pathway; 5-amino-1-(5-phospho-D-ribosyl)imidazole from N(2)-formyl-N(1)-(5-phospho-D-ribosyl)glycinamide: step 1/2. In terms of biological role, part of the phosphoribosylformylglycinamidine synthase complex involved in the purines biosynthetic pathway. Catalyzes the ATP-dependent conversion of formylglycinamide ribonucleotide (FGAR) and glutamine to yield formylglycinamidine ribonucleotide (FGAM) and glutamate. The FGAM synthase complex is composed of three subunits. PurQ produces an ammonia molecule by converting glutamine to glutamate. PurL transfers the ammonia molecule to FGAR to form FGAM in an ATP-dependent manner. PurS interacts with PurQ and PurL and is thought to assist in the transfer of the ammonia molecule from PurQ to PurL. In Lactobacillus delbrueckii subsp. bulgaricus (strain ATCC 11842 / DSM 20081 / BCRC 10696 / JCM 1002 / NBRC 13953 / NCIMB 11778 / NCTC 12712 / WDCM 00102 / Lb 14), this protein is Phosphoribosylformylglycinamidine synthase subunit PurL.